The following is a 419-amino-acid chain: Gamma-glutamyl phosphate reductase (419 aa).

This sequence belongs to the gamma-glutamyl phosphate reductase family.

The protein localises to the cytoplasm. The catalysed reaction is L-glutamate 5-semialdehyde + phosphate + NADP(+) = L-glutamyl 5-phosphate + NADPH + H(+). The protein operates within amino-acid biosynthesis; L-proline biosynthesis; L-glutamate 5-semialdehyde from L-glutamate: step 2/2. Its function is as follows. Catalyzes the NADPH-dependent reduction of L-glutamate 5-phosphate into L-glutamate 5-semialdehyde and phosphate. The product spontaneously undergoes cyclization to form 1-pyrroline-5-carboxylate. The chain is Gamma-glutamyl phosphate reductase from Tolumonas auensis (strain DSM 9187 / NBRC 110442 / TA 4).